A 543-amino-acid chain; its full sequence is Serendipity locus protein alpha (543 aa).

The protein localises to the cytoplasm. It localises to the cell membrane. Required for the cellularization of the syncytial blastoderm embryo. Involved in the localization of the actin filaments just prior to and during plasma membrane invagination. Sry-alpha together with nullo and bnk may provide auxiliary functions, by acting both to stabilize a large and dynamic microfilament structure and regulate its functions. This is Serendipity locus protein alpha (Sry-alpha) from Drosophila subobscura (Fruit fly).